A 209-amino-acid chain; its full sequence is Dual-specificity protein phosphatase SDP1 (209 aa).

The segment covering 1 to 11 (MNIYTSPTRTP) has biased composition (polar residues). The interval 1 to 43 (MNIYTSPTRTPNIAPKSGQRPSLPMLATDERSTDKESPNEDRE) is disordered. The span at 28–43 (TDERSTDKESPNEDRE) shows a compositional bias: basic and acidic residues. Cysteines 47 and 142 form a disulfide. Positions 59–196 (GPLLVLPEKI…LMEWEVALNA (138 aa)) constitute a Tyrosine-protein phosphatase domain. Histidine 111 serves as a coordination point for 4-O-phospho-L-tyrosine. Cysteine 140 functions as the Phosphocysteine intermediate in the catalytic mechanism.

The protein belongs to the protein-tyrosine phosphatase family. Non-receptor class dual specificity subfamily.

The catalysed reaction is O-phospho-L-tyrosyl-[protein] + H2O = L-tyrosyl-[protein] + phosphate. In terms of biological role, mediates dephosphorylation of MAPK substrates such as SLT2, acquiring enhanced catalytic activity under oxidative conditions. This chain is Dual-specificity protein phosphatase SDP1 (SDP1), found in Saccharomyces cerevisiae (strain ATCC 204508 / S288c) (Baker's yeast).